Consider the following 555-residue polypeptide: Formate--tetrahydrofolate ligase (555 aa).

65–72 lines the ATP pocket; the sequence is TPAGEGKS.

The protein belongs to the formate--tetrahydrofolate ligase family.

It catalyses the reaction (6S)-5,6,7,8-tetrahydrofolate + formate + ATP = (6R)-10-formyltetrahydrofolate + ADP + phosphate. The protein operates within one-carbon metabolism; tetrahydrofolate interconversion. In Staphylococcus aureus (strain USA300), this protein is Formate--tetrahydrofolate ligase.